Consider the following 168-residue polypeptide: UPF0262 protein BBta_0898 (168 aa).

It belongs to the UPF0262 family.

The chain is UPF0262 protein BBta_0898 from Bradyrhizobium sp. (strain BTAi1 / ATCC BAA-1182).